Reading from the N-terminus, the 604-residue chain is Prostaglandin G/H synthase 2 (604 aa).

The N-terminal stretch at 1–17 (MLARALLLCVALALGHA) is a signal peptide. Residues 18-55 (ANPCCSNPCQNRGVCMSVGFDQYQCDCTRTGFYGENCS) form the EGF-like domain. 4 cysteine pairs are disulfide-bonded: Cys21–Cys32, Cys22–Cys145, Cys26–Cys42, and Cys44–Cys54. Residue Asn53 is glycosylated (N-linked (GlcNAc...) asparagine). Substrate is bound at residue Arg106. Asn130 is a glycosylation site (N-linked (GlcNAc...) asparagine). The Proton acceptor role is filled by His193. Tyr341 serves as a coordination point for substrate. The active-site For cyclooxygenase activity is Tyr371. Residue His374 participates in heme b binding. Asn396 carries N-linked (GlcNAc...) asparagine glycosylation. Position 526 is an S-nitrosocysteine (Cys526). Cys555 and Cys561 form a disulfide bridge. A glycan (N-linked (GlcNAc...) asparagine) is linked at Asn580.

Belongs to the prostaglandin G/H synthase family. In terms of assembly, homodimer. Requires heme b as cofactor. In terms of processing, S-nitrosylation by NOS2 (iNOS) activates enzyme activity. S-nitrosylation may take place on different Cys residues in addition to Cys-526.

The protein localises to the microsome membrane. Its subcellular location is the endoplasmic reticulum membrane. It localises to the nucleus inner membrane. The protein resides in the nucleus outer membrane. It catalyses the reaction (5Z,8Z,11Z,14Z)-eicosatetraenoate + AH2 + 2 O2 = prostaglandin H2 + A + H2O. The enzyme catalyses (5Z,8Z,11Z,14Z)-eicosatetraenoate + 2 O2 = prostaglandin G2. It carries out the reaction prostaglandin G2 + AH2 = prostaglandin H2 + A + H2O. The catalysed reaction is (5Z,8Z,11Z,14Z,17Z)-eicosapentaenoate + 2 O2 = prostaglandin G3. It catalyses the reaction prostaglandin G3 + AH2 = prostaglandin H3 + A + H2O. The enzyme catalyses (8Z,11Z,14Z)-eicosatrienoate + 2 O2 = prostaglandin G1. It carries out the reaction prostaglandin G1 + AH2 = prostaglandin H1 + A + H2O. The catalysed reaction is 2-(5Z,8Z,11Z,14Z)-eicosatetraenoyl-sn-glycero-3-phosphoethanolamine + 2 O2 = 2-(prostaglandin G2)-sn-glycero-3-phosphoethanolamine. It catalyses the reaction 2-(prostaglandin G2)-sn-glycero-3-phosphoethanolamine + AH2 = 2-(prostaglandin H2)-sn-glycero-3-phosphoethanolamine + A + H2O. The enzyme catalyses 2-(5Z,8Z,11Z,14Z)-eicosatetraenoyl-sn-glycero-3-phosphocholine + 2 O2 = 2-(prostaglandin G2)-sn-glycero-3-phosphocholine. It carries out the reaction 2-(prostaglandin G2)-sn-glycero-3-phosphocholine + AH2 = 2-(prostaglandin H2)-sn-glycero-3-phosphocholine + A + H2O. The catalysed reaction is (15S)-hydroperoxy-(5Z,8Z,11Z,13E)-eicosatetraenoate + AH2 = (15S)-hydroxy-(5Z,8Z,11Z,13E)-eicosatetraenoate + A + H2O. It catalyses the reaction 2-(5Z,8Z,11Z,14Z)-eicosatetraenoyl-sn-glycero-3-phosphocholine + AH2 + O2 = 2-[(15S)-hydroxy-(5Z,8Z,11Z,13E)-eicosatetraenoyl]-sn-glycero-3-phosphocholine + A + H2O. The enzyme catalyses 2-(5Z,8Z,11Z,14Z)-eicosatetraenoyl-sn-glycero-3-phosphocholine + AH2 + O2 = 2-[(15R)-hydroxy-(5Z,8Z,11Z,13E)-eicosatetraenoyl]-sn-glycero-3-phosphocholine + A + H2O. It carries out the reaction 2-(5Z,8Z,11Z,14Z)-eicosatetraenoyl-sn-glycero-3-phosphocholine + AH2 + O2 = 2-[(11R)-hydroxy-(5Z,8Z,12E,14Z)-eicosatetraenoyl]-sn-glycero-3-phosphocholine + A + H2O. The catalysed reaction is (9Z,12Z)-octadecadienoate + AH2 + O2 = 9-hydroxy-(10E,12Z)-octadecadienoate + A + H2O. It catalyses the reaction (9Z,12Z)-octadecadienoate + AH2 + O2 = 13-hydroxy-(9Z,11E)-octadecadienoate + A + H2O. The enzyme catalyses (5Z,8Z,11Z,14Z)-eicosatetraenoate + AH2 + O2 = (15R)-hydroxy-(5Z,8Z,11Z,13E)-eicosatetraenoate + A + H2O. It carries out the reaction (5Z,8Z,11Z,14Z)-eicosatetraenoate + AH2 + O2 = (11R)-hydroxy-(5Z,8Z,12E,14Z)-eicosatetraenoate + A + H2O. The catalysed reaction is (5Z,8Z,11Z,14Z,17Z)-eicosapentaenoate + AH2 + O2 = (11R)-hydroxy-(5Z,8Z,12E,14Z,17Z)-eicosapentaenoate + A + H2O. It catalyses the reaction (5Z,8Z,11Z,14Z,17Z)-eicosapentaenoate + AH2 + O2 = (18S)-hydroxy-(5Z,8Z,11Z,14Z,16E)-eicosapentaenoate + A + H2O. The enzyme catalyses (5Z,8Z,11Z,14Z,17Z)-eicosapentaenoate + AH2 + O2 = (18R)-hydroxy-(5Z,8Z,11Z,14Z,16E)-eicosapentaenoate + A + H2O. It carries out the reaction (5Z,8Z,11Z,14Z,17Z)-eicosapentaenoate + AH2 + O2 = (15R)-hydroxy-(5Z,8Z,11Z,13E,17Z)-eicosapentaenoate + A + H2O. The catalysed reaction is (5Z,8Z,11Z,14Z,17Z)-eicosapentaenoate + AH2 + O2 = (15S)-hydroxy-(5Z,8Z,11Z,13E,17Z)-eicosapentaenoate + A + H2O. It catalyses the reaction (7Z,10Z,13Z,16Z,19Z)-docosapentaenoate + AH2 + O2 = 13R-hydroxy-(7Z,10Z,14E,16Z,19Z)-docosapentaenoate + A + H2O. The enzyme catalyses (4Z,7Z,10Z,13Z,16Z,19Z)-docosahexaenoate + AH2 + O2 = 13-hydroxy-(4Z,7Z,10Z,14E,16Z,19Z)-docosahexaenoate + A + H2O. It carries out the reaction (5S)-hydroxy-(6E,8Z,11Z,14Z)-eicosatetraenoate + AH2 + O2 = (5S,15R)-dihydroxy-(6E,8Z,11Z,13E)-eicosatetraenoate + A + H2O. The catalysed reaction is (4Z,7Z,10Z,13Z,16Z,19Z)-docosahexaenoate + AH2 + O2 = 17R-hydroxy-(4Z,7Z,10Z,13Z,15E,19Z)-docosahexaenoate + A + H2O. It catalyses the reaction (5S)-hydroxy-(6E,8Z,11Z,14Z)-eicosatetraenoate + AH2 + O2 = (5S,15S)-dihydroxy-(6E,8Z,11Z,13E)-eicosatetraenoate + A + H2O. The enzyme catalyses (5S)-hydroxy-(6E,8Z,11Z,14Z)-eicosatetraenoate + AH2 + O2 = (5S,11R)-dihydroxy-(6E,8Z,12E,14Z)-eicosatetraenoate + A + H2O. It carries out the reaction 2-(5Z,8Z,11Z,14Z-eicosatetraenoyl)-glycerol + 2 O2 = 2-glyceryl-prostaglandin G2. The catalysed reaction is 2-glyceryl-prostaglandin G2 + AH2 = 2-glyceryl-prostaglandin H2 + A + H2O. It catalyses the reaction (5Z,8Z,11Z,14Z)-eicosatetraenoate + O2 = (15R)-hydroperoxy-(5Z,8Z,11Z,13E)-eicosatetraenoate. The enzyme catalyses (5Z,8Z,11Z,14Z)-eicosatetraenoate + O2 = 11R-hydroperoxy-(5Z,8Z,12E,14Z)-eicosatetraenoate. It carries out the reaction (9Z,12Z)-octadecadienoate + AH2 + O2 = (9R)-hydroxy-(10E,12Z)-octadecadienoate + A + H2O. The catalysed reaction is (9Z,12Z)-octadecadienoate + AH2 + O2 = (9S)-hydroxy-(10E,12Z)-octadecadienoate + A + H2O. It catalyses the reaction (9Z,12Z)-octadecadienoate + AH2 + O2 = (13S)-hydroxy-(9Z,11E)-octadecadienoate + A + H2O. The enzyme catalyses (9Z,12Z)-octadecadienoate + AH2 + O2 = (13R)-hydroxy-(9Z,11E)-octadecadienoate + A + H2O. It participates in lipid metabolism; prostaglandin biosynthesis. Functionally, dual cyclooxygenase and peroxidase in the biosynthesis pathway of prostanoids, a class of C20 oxylipins mainly derived from arachidonate ((5Z,8Z,11Z,14Z)-eicosatetraenoate, AA, C20:4(n-6)), with a particular role in the inflammatory response. The cyclooxygenase activity oxygenates AA to the hydroperoxy endoperoxide prostaglandin G2 (PGG2), and the peroxidase activity reduces PGG2 to the hydroxy endoperoxide prostaglandin H2 (PGH2), the precursor of all 2-series prostaglandins and thromboxanes. This complex transformation is initiated by abstraction of hydrogen at carbon 13 (with S-stereochemistry), followed by insertion of molecular O2 to form the endoperoxide bridge between carbon 9 and 11 that defines prostaglandins. The insertion of a second molecule of O2 (bis-oxygenase activity) yields a hydroperoxy group in PGG2 that is then reduced to PGH2 by two electrons. Similarly catalyzes successive cyclooxygenation and peroxidation of dihomo-gamma-linoleate (DGLA, C20:3(n-6)) and eicosapentaenoate (EPA, C20:5(n-3)) to corresponding PGH1 and PGH3, the precursors of 1- and 3-series prostaglandins. In an alternative pathway of prostanoid biosynthesis, converts 2-arachidonoyl lysophopholipids to prostanoid lysophopholipids, which are then hydrolyzed by intracellular phospholipases to release free prostanoids. Metabolizes 2-arachidonoyl glycerol yielding the glyceryl ester of PGH2, a process that can contribute to pain response. Generates lipid mediators from n-3 and n-6 polyunsaturated fatty acids (PUFAs) via a lipoxygenase-type mechanism. Oxygenates PUFAs to hydroperoxy compounds and then reduces them to corresponding alcohols. Plays a role in the generation of resolution phase interaction products (resolvins) during both sterile and infectious inflammation. Metabolizes docosahexaenoate (DHA, C22:6(n-3)) to 17R-HDHA, a precursor of the D-series resolvins (RvDs). As a component of the biosynthetic pathway of E-series resolvins (RvEs), converts eicosapentaenoate (EPA, C20:5(n-3)) primarily to 18S-HEPE that is further metabolized by ALOX5 and LTA4H to generate 18S-RvE1 and 18S-RvE2. In vascular endothelial cells, converts docosapentaenoate (DPA, C22:5(n-3)) to 13R-HDPA, a precursor for 13-series resolvins (RvTs) shown to activate macrophage phagocytosis during bacterial infection. In activated leukocytes, contributes to oxygenation of hydroxyeicosatetraenoates (HETE) to diHETES (5,15-diHETE and 5,11-diHETE). Can also use linoleate (LA, (9Z,12Z)-octadecadienoate, C18:2(n-6)) as substrate and produce hydroxyoctadecadienoates (HODEs) in a regio- and stereospecific manner, being (9R)-HODE ((9R)-hydroxy-(10E,12Z)-octadecadienoate) and (13S)-HODE ((13S)-hydroxy-(9Z,11E)-octadecadienoate) its major products. During neuroinflammation, plays a role in neuronal secretion of specialized preresolving mediators (SPMs) 15R-lipoxin A4 that regulates phagocytic microglia. This chain is Prostaglandin G/H synthase 2 (PTGS2), found in Equus caballus (Horse).